Reading from the N-terminus, the 309-residue chain is tRNA pseudouridine synthase B (309 aa).

The Nucleophile role is filled by Asp-39.

Belongs to the pseudouridine synthase TruB family. Type 1 subfamily.

It catalyses the reaction uridine(55) in tRNA = pseudouridine(55) in tRNA. Responsible for synthesis of pseudouridine from uracil-55 in the psi GC loop of transfer RNAs. The polypeptide is tRNA pseudouridine synthase B (Bacillus velezensis (strain DSM 23117 / BGSC 10A6 / LMG 26770 / FZB42) (Bacillus amyloliquefaciens subsp. plantarum)).